We begin with the raw amino-acid sequence, 658 residues long: MREPTNRQGSPGPGEPRPPAQGRPRFPTWILWVALLALALWNVYTFFWPSSGARLNIPYSAFIQQVEGENVSSVTIRGQRVSGTFTEEVRVAGDQVLSPGDPVPPGTSPNEIRTGTQFQTTIPENSQTELVPLLQSHGVTVKIDQAGGSVWPSLLATIVPLFLFIGLMVYLGRSMSRGQQNVFSFGRSKARVYDAERPRVTFADVAGEEEAKAELSEVVDFLRNPMKYHAIGARLPRGILLVGPPGTGKTLLARAVAGEAGVPFFSVSASEFVEMFVGVGASRVRDLFERAKASAPSIMFVDELDAVGRQRFAGLGGGNDEREQTLNQLLVEMDGFEPHQDVIVIAATNRPDVLDPALLRPGRFDRQVTVGLPDRRGREAILRIHTRGIPVADDLDLEELAAATPGFSGADLANLVNEAALMAARKNKKIVERIDFDEALDKIVLGTERAMIMSEHDKRVVAYHEAGHAVAAHFSPGTDPLRKVSIVPRGQSLGVTIQAPEEDRFNYSRAYLLARLTVMMGGRAAEKLVFNEMTTGAQNDLKEATLLARRMVGLWGMSDEVGPVYLGMGEQHVFLGREIMQDRDVAEATLERADEAVQRLLREAMERAEQLLRKYRDKLDALAEALIAEETIGQEKITEILGAPPVPSAAPAAAADSV.

The disordered stretch occupies residues 1 to 22; that stretch reads MREPTNRQGSPGPGEPRPPAQG. Topologically, residues 1-28 are cytoplasmic; the sequence is MREPTNRQGSPGPGEPRPPAQGRPRFPT. The helical transmembrane segment at 29 to 49 threads the bilayer; the sequence is WILWVALLALALWNVYTFFWP. Over 50-149 the chain is Extracellular; the sequence is SSGARLNIPY…TVKIDQAGGS (100 aa). The segment at 95-114 is disordered; it reads QVLSPGDPVPPGTSPNEIRT. Residues 150 to 170 traverse the membrane as a helical segment; sequence VWPSLLATIVPLFLFIGLMVY. At 171-658 the chain is on the cytoplasmic side; sequence LGRSMSRGQQ…AAPAAAADSV (488 aa). 243–250 provides a ligand contact to ATP; it reads GPPGTGKT. A Zn(2+)-binding site is contributed by H464. E465 is a catalytic residue. Residues H468 and D540 each contribute to the Zn(2+) site.

This sequence in the central section; belongs to the AAA ATPase family. In the C-terminal section; belongs to the peptidase M41 family. As to quaternary structure, homohexamer. Requires Zn(2+) as cofactor.

It is found in the cell membrane. Acts as a processive, ATP-dependent zinc metallopeptidase for both cytoplasmic and membrane proteins. Plays a role in the quality control of integral membrane proteins. The sequence is that of ATP-dependent zinc metalloprotease FtsH 4 (ftsh4) from Sphaerobacter thermophilus (strain ATCC 49802 / DSM 20745 / KCCM 41009 / NCIMB 13125 / S 6022).